Reading from the N-terminus, the 1377-residue chain is Endoribonuclease Dicer homolog 2b (1377 aa).

Gly residues predominate over residues 1 to 15 (MGGPLTAAGGRGDGG). A disordered region spans residues 1–30 (MGGPLTAAGGRGDGGAKAVEPLRPPPPPDP). In terms of domain architecture, Helicase ATP-binding spans 41 to 222 (ALERAVRGNT…HNYSKQISEI (182 aa)). ATP is bound at residue 54 to 61 (LETGSGKT). The DECH box signature appears at 163-166 (DECH). Residues 388–561 (TLLQYRHMQD…DTYYRVESTP (174 aa)) form the Helicase C-terminal domain. The 93-residue stretch at 534-626 (SLRLGSISCQ…LPELDVPCDE (93 aa)) folds into the Dicer dsRNA-binding fold domain. The region spanning 798–913 (RDIDLLQTKD…LPPELCRIIM (116 aa)) is the PAZ domain. RNase III domains follow at residues 940 to 1095 (SVKL…STAG) and 1132 to 1276 (VRSL…LDSK). Mg(2+) is bound by residues Glu-1171, Asp-1262, and Glu-1265. Residues 1302–1367 (DPVKGLQEFC…SKAVLKDLIA (66 aa)) enclose the DRBM domain.

This sequence belongs to the helicase family. Dicer subfamily. May interact with ARGONAUTE1 or PINHEAD through their common PAZ domains. Mg(2+) serves as cofactor. It depends on Mn(2+) as a cofactor.

The protein resides in the nucleus. Probably involved in the RNA silencing pathway. May cleave double-stranded RNA to produce short 21-24 nucleotides (nt) RNAs which target the selective destruction of complementary RNAs. The sequence is that of Endoribonuclease Dicer homolog 2b (DCL2B) from Oryza sativa subsp. japonica (Rice).